A 137-amino-acid chain; its full sequence is MKIIGLDVGSKTIGVAVSDALGWTAQGVKTIRWDENDLSSADEELEKIISEHEIGKAIIGLPKNMNGTIGERGEASQRYANHIEKVFQIPVDLWDERLTTMAAERVLLEADMSRSKRKKVIDKMAAVMILQGYLDQK.

It belongs to the YqgF nuclease family.

It is found in the cytoplasm. Functionally, could be a nuclease involved in processing of the 5'-end of pre-16S rRNA. The protein is Putative pre-16S rRNA nuclease of Oceanobacillus iheyensis (strain DSM 14371 / CIP 107618 / JCM 11309 / KCTC 3954 / HTE831).